The following is a 142-amino-acid chain: HTH-type transcriptional regulator MntR (142 aa).

One can recognise an HTH dtxR-type domain in the interval 1 to 63 (MPTPSMEDYI…YEKYRGLVLT (63 aa)). Mn(2+)-binding residues include aspartate 8, glutamate 11, histidine 77, glutamate 99, glutamate 102, and histidine 103.

It belongs to the DtxR/MntR family. In terms of assembly, homodimer.

The protein resides in the cytoplasm. Its activity is regulated as follows. DNA binding is strongly activated by Mn(2+). In terms of biological role, central regulator of manganese homeostasis. The polypeptide is HTH-type transcriptional regulator MntR (Bacillus mycoides (strain KBAB4) (Bacillus weihenstephanensis)).